The sequence spans 70 residues: UPF0352 protein PSHAa1818 (70 aa).

Belongs to the UPF0352 family.

In Pseudoalteromonas translucida (strain TAC 125), this protein is UPF0352 protein PSHAa1818.